The primary structure comprises 75 residues: Small integral membrane protein 7-A (75 aa).

The N-terminal stretch at Met-1–Ala-17 is a signal peptide. Topologically, residues Val-18 to Tyr-53 are extracellular. Residues Phe-54–Gly-74 traverse the membrane as a helical segment. Position 75 (Ser-75) is a topological domain, cytoplasmic.

The protein belongs to the SMIM7 family.

The protein resides in the membrane. The chain is Small integral membrane protein 7-A (smim7-a) from Xenopus laevis (African clawed frog).